The following is a 112-amino-acid chain: Conotoxin vil14.5 (112 aa).

Residues 1 to 22 form the signal peptide; that stretch reads MGFRVLVLVVMATTSALPFTFS. A propeptide spanning residues 23–85 is cleaved from the precursor; that stretch reads EEPGRSPFRP…FAELSVGQRR (63 aa). The tract at residues 53–74 is disordered; that stretch reads RADGQPPDMRQPEMRRPEVRQP. Residues 62–74 are compositionally biased toward basic and acidic residues; the sequence is RQPEMRRPEVRQP. 2 disulfides stabilise this stretch: C91/C111 and C95/C107.

It belongs to the conotoxin R superfamily. In terms of tissue distribution, expressed by the venom duct.

Its subcellular location is the secreted. This Conus villepinii (Villepin's cone) protein is Conotoxin vil14.5.